A 162-amino-acid chain; its full sequence is Caveolin-2 (162 aa).

Over 1–86 (MGLETEKADV…FEVSKYVIYK (86 aa)) the chain is Cytoplasmic. Phosphotyrosine; by SRC is present on Y19. Phosphoserine occurs at positions 20 and 23. Y27 is modified (phosphotyrosine; by SRC). The segment at residues 87–107 (FLTLFLAIPLAFAAGILFATL) is an intramembrane region (helical). Residues 108-162 (SCLHIWIVMPFVKTCLMVLPSVQTIWKSVTDVVIAPLCASVGRSFSSVSMQLSRD) are Cytoplasmic-facing.

This sequence belongs to the caveolin family. As to quaternary structure, monomer or homodimer. Interacts with CAV1; the interaction forms a stable heterooligomeric complex that is required for targeting to lipid rafts and for caveolae formation. Tyrosine phosphorylated forms do not form heterooligomers with the Tyr-19-phosphorylated form existing as a monomer or dimer, and the Tyr-27-form as a monomer only. Interacts (tyrosine phosphorylated form) with the SH2 domain-containing proteins, RASA1, NCK1 and SRC. Interacts (tyrosine phosphorylated form) with INSR, the interaction (Tyr-27-phosphorylated form) is increased on insulin stimulation. Interacts (Tyr-19 phosphorylated form) with MAPK1 (phosphorylated form); the interaction, promoted by insulin, leads to nuclear location and MAPK1 activation. Interacts with STAT3; the interaction is increased on insulin-induced tyrosine phosphorylation leading to STAT activation. In terms of processing, phosphorylated on serine and tyrosine residues. CAV1 promotes phosphorylation on Ser-23 which then targets the complex to the plasma membrane, lipid rafts and caveolae. Phosphorylation on both Tyr-19 and Tyr-27 is required for insulin-induced 'Ser-727' phosphorylation of STAT3 and its activation. Phosphorylation on Tyr-19 is required for insulin-induced phosphorylation of MAPK1 and DNA binding of STAT3. Tyrosine phosphorylation is induced by both EGF and insulin.

The protein resides in the nucleus. It is found in the cytoplasm. The protein localises to the golgi apparatus membrane. It localises to the cell membrane. Its subcellular location is the membrane. The protein resides in the caveola. May act as a scaffolding protein within caveolar membranes. Interacts directly with G-protein alpha subunits and can functionally regulate their activity. Acts as an accessory protein in conjunction with CAV1 in targeting to lipid rafts and driving caveolae formation. Positive regulator of cellular mitogenesis of the MAPK signaling pathway. Required for the insulin-stimulated nuclear translocation and activation of MAPK1 and STAT3, and the subsequent regulation of cell cycle progression. The sequence is that of Caveolin-2 (CAV2) from Rhinolophus ferrumequinum (Greater horseshoe bat).